A 550-amino-acid polypeptide reads, in one-letter code: Glucose-6-phosphate isomerase (550 aa).

Catalysis depends on glutamate 356, which acts as the Proton donor. Active-site residues include histidine 387 and lysine 515.

Belongs to the GPI family.

It localises to the cytoplasm. The enzyme catalyses alpha-D-glucose 6-phosphate = beta-D-fructose 6-phosphate. The protein operates within carbohydrate biosynthesis; gluconeogenesis. Its pathway is carbohydrate degradation; glycolysis; D-glyceraldehyde 3-phosphate and glycerone phosphate from D-glucose: step 2/4. Its function is as follows. Catalyzes the reversible isomerization of glucose-6-phosphate to fructose-6-phosphate. In Vibrio atlanticus (strain LGP32) (Vibrio splendidus (strain Mel32)), this protein is Glucose-6-phosphate isomerase.